Here is a 395-residue protein sequence, read N- to C-terminus: MLRSWEFVLLISCFLCFSSDALQRISLKKMPSIRETLQEMGMKVADVLPSLKHRISYLDEGLHNKTASTILTNFRDTQYYGEISIGTPAQIFKVVFDTGSSNLWVPSRQCSPLYSACVSHNRYDSSESSTYKPKGTKITLTYAQGYIKGFFSQDIVRVADIPIIQFFTEAIALPSIPFIFARFDGVLGMGYPKQAIGGVIPVFDNIMSEKVLSENVFSVYYSRHSESNTGGEIILGGSDPSHYTGDFHYVSTSREGYWHVDLKGVSIENKIVLCHDGCTATIDTGTSFISGPASSISVLMETIGATLSDGDYVIDCKKINLLPDITFHLGDMTYSLSSSTYVLKFSDETECTVAFMAVDIPPPLGPLWLLGATFIKQYYIEFDRQNNRIGFATSF.

The signal sequence occupies residues 1–21 (MLRSWEFVLLISCFLCFSSDA). A propeptide spans 22–43 (LQRISLKKMPSIRETLQEMGMK) (activation peptide). N-linked (GlcNAc...) asparagine glycosylation is present at Asn64. A Peptidase A1 domain is found at 79–392 (YYGEISIGTP…DRQNNRIGFA (314 aa)). The active site involves Asp97. 2 disulfides stabilise this stretch: Cys110–Cys117 and Cys274–Cys278. Asp283 is an active-site residue. Cys316 and Cys351 are oxidised to a cystine.

Belongs to the peptidase A1 family. In terms of processing, N-glycosylated. In terms of tissue distribution, expressed by the venom gland (at protein level).

It is found in the secreted. It carries out the reaction Cleavage of Leu-|-Xaa bond in angiotensinogen to generate angiotensin I.. Inhibited completely by aspartyl protease inhibitor pepstatin A, but not by the serine- or metalloproteinase inhibitors PMSF or EDTA. Functionally, renin is a highly specific endopeptidase, whose only known function is to generate angiotensin I from angiotensinogen in the plasma, initiating a cascade of reactions that produce an elevation of blood pressure and increased sodium retention by the kidney. This protein is also found in snake venom and shown to specifically cleave human and porcine angiotensinogen into angiotensin I. It does not have general protease activity, no cleavage of alpha or beta casein. May be directly responsible for elevation of blood pressure in the victims of envenomation. The chain is Renin from Echis ocellatus (Ocellated saw-scaled viper).